A 71-amino-acid polypeptide reads, in one-letter code: Large ribosomal subunit protein bL31 (71 aa).

Positions 16, 18, 38, and 41 each coordinate Zn(2+).

It belongs to the bacterial ribosomal protein bL31 family. Type A subfamily. As to quaternary structure, part of the 50S ribosomal subunit. Requires Zn(2+) as cofactor.

Its function is as follows. Binds the 23S rRNA. This is Large ribosomal subunit protein bL31 from Francisella tularensis subsp. mediasiatica (strain FSC147).